We begin with the raw amino-acid sequence, 378 residues long: Chaperone protein DnaJ (378 aa).

One can recognise a J domain in the interval 5 to 70 (DYYEVLGVGR…NKKAAYDQFG (66 aa)). The segment at 134 to 212 (GLTKELRIPT…CHGDGRVEKT (79 aa)) adopts a CR-type zinc-finger fold. Residues Cys-147, Cys-150, Cys-164, Cys-167, Cys-186, Cys-189, Cys-200, and Cys-203 each coordinate Zn(2+). 4 CXXCXGXG motif repeats span residues 147 to 154 (CDVCDGSG), 164 to 171 (CTTCHGQG), 186 to 193 (CPTCHGRG), and 200 to 207 (CAKCHGDG).

It belongs to the DnaJ family. In terms of assembly, homodimer. Zn(2+) is required as a cofactor.

The protein localises to the cytoplasm. Its function is as follows. Participates actively in the response to hyperosmotic and heat shock by preventing the aggregation of stress-denatured proteins and by disaggregating proteins, also in an autonomous, DnaK-independent fashion. Unfolded proteins bind initially to DnaJ; upon interaction with the DnaJ-bound protein, DnaK hydrolyzes its bound ATP, resulting in the formation of a stable complex. GrpE releases ADP from DnaK; ATP binding to DnaK triggers the release of the substrate protein, thus completing the reaction cycle. Several rounds of ATP-dependent interactions between DnaJ, DnaK and GrpE are required for fully efficient folding. Also involved, together with DnaK and GrpE, in the DNA replication of plasmids through activation of initiation proteins. The chain is Chaperone protein DnaJ from Shewanella oneidensis (strain ATCC 700550 / JCM 31522 / CIP 106686 / LMG 19005 / NCIMB 14063 / MR-1).